Reading from the N-terminus, the 97-residue chain is UPF0213 protein BLi00048/BL00536 (97 aa).

In terms of domain architecture, GIY-YIG spans 4 to 79 (NSHYFYVLSC…KKLSRKNKER (76 aa)).

The protein belongs to the UPF0213 family.

The chain is UPF0213 protein BLi00048/BL00536 from Bacillus licheniformis (strain ATCC 14580 / DSM 13 / JCM 2505 / CCUG 7422 / NBRC 12200 / NCIMB 9375 / NCTC 10341 / NRRL NRS-1264 / Gibson 46).